The chain runs to 235 residues: Exosome complex component RRP46 (235 aa).

Over residues 1 to 13 (MEEETHTDAKIRA) the composition is skewed to basic and acidic residues. The segment at 1–24 (MEEETHTDAKIRAENGTGSSPRGP) is disordered. Ser-20 is modified (phosphoserine).

This sequence belongs to the RNase PH family. Homodimer. Component of the RNA exosome core complex (Exo-9), composed of EXOSC1, EXOSC2, EXOSC3, EXOSC4, EXOSC5, EXOSC6, EXOSC7, EXOSC8 and EXOSC9; within the complex interacts with EXOSC3, EXOSC8, and EXOSC9. The catalytically inactive RNA exosome core complex (Exo-9) associates with the catalytic subunit EXOSC10/RRP6. Exo-9 may associate with DIS3 to form the nucleolar exosome complex, or DIS3L to form the cytoplasmic exosome complex. Exo-9 is formed by a hexameric base ring consisting of the heterodimers EXOSC4-EXOSC9, EXOSC5-EXOSC8 and EXOSC6-EXOSC7, and a cap ring consisting of EXOSC1, EXOSC2 and EXOSC3. The RNA exosome complex associates with cofactors C1D/RRP47, MPHOSPH6/MPP6 and MTREX/MTR4. Interacts with GTPBP1. Interacts with ZC3HAV1. Interacts with DDX17 only in the presence of ZC3HAV1 in an RNA-independent manner. Highly expressed in a variety of hematopoietic and epithelial tumor cell lines, but not in normal hematopoietic tissues or other normal tissue, with the exception of testis.

It is found in the nucleus. The protein resides in the nucleolus. Its subcellular location is the cytoplasm. Functionally, non-catalytic component of the RNA exosome complex which has 3'-&gt;5' exoribonuclease activity and participates in a multitude of cellular RNA processing and degradation events. In the nucleus, the RNA exosome complex is involved in proper maturation of stable RNA species such as rRNA, snRNA and snoRNA, in the elimination of RNA processing by-products and non-coding 'pervasive' transcripts, such as antisense RNA species and promoter-upstream transcripts (PROMPTs), and of mRNAs with processing defects, thereby limiting or excluding their export to the cytoplasm. The RNA exosome may be involved in Ig class switch recombination (CSR) and/or Ig variable region somatic hypermutation (SHM) by targeting AICDA deamination activity to transcribed dsDNA substrates. In the cytoplasm, the RNA exosome complex is involved in general mRNA turnover and specifically degrades inherently unstable mRNAs containing AU-rich elements (AREs) within their 3' untranslated regions, and in RNA surveillance pathways, preventing translation of aberrant mRNAs. It seems to be involved in degradation of histone mRNA. The catalytic inactive RNA exosome core complex of 9 subunits (Exo-9) is proposed to play a pivotal role in the binding and presentation of RNA for ribonucleolysis, and to serve as a scaffold for the association with catalytic subunits and accessory proteins or complexes. In vitro, EXOSC5 does not bind or digest single-stranded RNA and binds to double-stranded DNA without detectable DNase activity. This Homo sapiens (Human) protein is Exosome complex component RRP46 (EXOSC5).